The primary structure comprises 104 residues: Acetylcholine receptor subunit alpha (104 aa).

Residues 1 to 104 (NPPAIFKSYC…YFIVNVIIPC (104 aa)) lie on the Extracellular side of the membrane. 2 cysteine pairs are disulfide-bonded: C10–C24 and C74–C75. An N-linked (GlcNAc...) asparagine glycan is attached at N23.

It belongs to the ligand-gated ion channel (TC 1.A.9) family. Acetylcholine receptor (TC 1.A.9.1) subfamily. Alpha-1/CHRNA1 sub-subfamily. One of the alpha chains that assemble within the acetylcholine receptor, a pentamer of two alpha chains, a beta, a delta, and a gamma or epsilon chains.

The protein localises to the postsynaptic cell membrane. It localises to the cell membrane. The enzyme catalyses K(+)(in) = K(+)(out). It catalyses the reaction Na(+)(in) = Na(+)(out). Its function is as follows. Upon acetylcholine binding, the AChR responds by an extensive change in conformation that affects all subunits and leads to opening of an ion-conducting channel across the plasma membrane. This Naja naja (Indian cobra) protein is Acetylcholine receptor subunit alpha (CHRNA1).